The chain runs to 281 residues: Nicotinamide/nicotinic acid mononucleotide adenylyltransferase 1 (281 aa).

Residues glycine 15 and serine 16 each coordinate beta-nicotinamide D-ribonucleotide. Positions 15, 16, 17, and 23 each coordinate NAD(+). 15–17 (GSF) contacts ATP. Histidine 24 lines the ATP pocket. Beta-nicotinamide D-ribonucleotide-binding residues include tyrosine 55 and lysine 57. Residue lysine 57 coordinates NAD(+). Lysine 58 contacts ATP. Beta-nicotinamide D-ribonucleotide is bound by residues tryptophan 92 and threonine 95. Tryptophan 92 and threonine 95 together coordinate NAD(+). Residues 113–143 (PQQNSPVLEKPGRKRKWAEQKQDISEKKSLE) form a disordered region. Serine 117 is subject to Phosphoserine. The Nuclear localization signal motif lies at 123-129 (PGRKRKW). Residues 129–143 (WAEQKQDISEKKSLE) show a composition bias toward basic and acidic residues. NAD(+) is bound by residues glycine 158, aspartate 160, leucine 170, tryptophan 171, glutamate 217, and asparagine 221. 158-160 (GAD) is a binding site for ATP. Beta-nicotinamide D-ribonucleotide-binding residues include leucine 170 and tryptophan 171. 226–229 (TKIR) serves as a coordination point for ATP.

This sequence belongs to the eukaryotic NMN adenylyltransferase family. Homohexamer. Interacts with ADPRT/PARP1. Zn(2+) serves as cofactor. The cofactor is Mg(2+).

The protein localises to the nucleus. It carries out the reaction beta-nicotinamide D-ribonucleotide + ATP + H(+) = diphosphate + NAD(+). The enzyme catalyses nicotinate beta-D-ribonucleotide + ATP + H(+) = deamido-NAD(+) + diphosphate. Its pathway is cofactor biosynthesis; NAD(+) biosynthesis; NAD(+) from nicotinamide D-ribonucleotide: step 1/1. It participates in cofactor biosynthesis; NAD(+) biosynthesis; deamido-NAD(+) from nicotinate D-ribonucleotide: step 1/1. Activity is strongly inhibited by galotannin. Inhibited by P1-(adenosine-5')-P4-(nicotinic-acid-riboside-5')-tetraphosphate (Nap4AD). Its function is as follows. Catalyzes the formation of NAD(+) from nicotinamide mononucleotide (NMN) and ATP. Can also use the deamidated form; nicotinic acid mononucleotide (NaMN) as substrate with the same efficiency. Can use triazofurin monophosphate (TrMP) as substrate. Also catalyzes the reverse reaction, i.e. the pyrophosphorolytic cleavage of NAD(+). For the pyrophosphorolytic activity, prefers NAD(+) and NaAD as substrates and degrades NADH, nicotinic acid adenine dinucleotide phosphate (NHD) and nicotinamide guanine dinucleotide (NGD) less effectively. Involved in the synthesis of ATP in the nucleus, together with PARP1, PARG and NUDT5. Nuclear ATP generation is required for extensive chromatin remodeling events that are energy-consuming. Fails to cleave phosphorylated dinucleotides NADP(+), NADPH and NaADP(+). Also acts as a cofactor for glutamate and aspartate ADP-ribosylation by directing PARP1 catalytic activity to glutamate and aspartate residues on histones. Protects against axonal degeneration following mechanical or toxic insults. Delays axonal degeneration after axotomy. Results in a &gt;10-fold increase in intact neurites 72 hours after injury. Neural protection does not correlate with cellular NAD(+) levels but may still require enzyme activity. This chain is Nicotinamide/nicotinic acid mononucleotide adenylyltransferase 1 (NMNAT1), found in Bos taurus (Bovine).